The primary structure comprises 89 residues: Probable Fe(2+)-trafficking protein (89 aa).

Belongs to the Fe(2+)-trafficking protein family.

Could be a mediator in iron transactions between iron acquisition and iron-requiring processes, such as synthesis and/or repair of Fe-S clusters in biosynthetic enzymes. In Legionella pneumophila (strain Paris), this protein is Probable Fe(2+)-trafficking protein.